The primary structure comprises 428 residues: 5-methylthioadenosine/S-adenosylhomocysteine deaminase (428 aa).

Residues histidine 65 and histidine 67 each coordinate Zn(2+). Residues glutamate 94, arginine 158, and histidine 184 each contribute to the substrate site. Histidine 211 serves as a coordination point for Zn(2+). Substrate is bound by residues glutamate 214 and aspartate 299. Position 299 (aspartate 299) interacts with Zn(2+).

The protein belongs to the metallo-dependent hydrolases superfamily. MTA/SAH deaminase family. Zn(2+) is required as a cofactor.

The catalysed reaction is S-adenosyl-L-homocysteine + H2O + H(+) = S-inosyl-L-homocysteine + NH4(+). The enzyme catalyses S-methyl-5'-thioadenosine + H2O + H(+) = S-methyl-5'-thioinosine + NH4(+). Catalyzes the deamination of 5-methylthioadenosine and S-adenosyl-L-homocysteine into 5-methylthioinosine and S-inosyl-L-homocysteine, respectively. Is also able to deaminate adenosine. In Moorella thermoacetica (strain ATCC 39073 / JCM 9320), this protein is 5-methylthioadenosine/S-adenosylhomocysteine deaminase.